An 893-amino-acid polypeptide reads, in one-letter code: MATEEFIIRIPPYHYIHVLDQNSNVSRVEVGPKTYIRQDNERVLFAPMRMVTVPPRHYCTVANPVSRDAQGLVLFDVTGQVRLRHADLEIRLAQDPFPLYPGEVLEKDITPLQVVLPNTALHLKALLDFEDKDGDKVVAGDEWLFEGPGTYIPRKEVEVVEIIQATIIRQNQALRLRARKECWDRDGKERVTGEEWLVTTVGAYLPAVFEEVLDLVDAVILTEKTALHLRARRNFRDFRGVSRRTGEEWLVTVQDTEAHVPDVHEEVLGVVPITTLGPHNYCVILDPVGPDGKNQLGQKRVVKGEKSFFLQPGEQLEQGIQDVYVLSEQQGLLLRALQPLEEGEDEEKVSHQAGDHWLIRGPLEYVPSAKVEVVEERQAIPLDENEGIYVQDVKTGKVRAVIGSTYMLTQDEVLWEKELPPGVEELLNKGQDPLADRGEKDTAKSLQPLAPRNKTRVVSYRVPHNAAVQVYDYREKRARVVFGPELVSLGPEEQFTVLSLSAGRPKRPHARRALCLLLGPDFFTDVITIETADHARLQLQLAYNWHFEVNDRKDPQETAKLFSVPDFVGDACKAIASRVRGAVASVTFDDFHKNSARIIRTAVFGFETSEAKGPDGMALPRPRDQAVFPQNGLVVSSVDVQSVEPVDQRTRDALQRSVQLAIEITTNSQEAAAKHEAQRLEQEARGRLERQKILDQSEAEKARKELLELEALSMAVESTGTAKAEAESRAEAARIEGEGSVLQAKLKAQALAIETEAELQRVQKVRELELVYARAQLELEVSKAQQLAEVEVKKFKQMTEAIGPSTIRDLAVAGPEMQVKLLQSLGLKSTLITDGSTPINLFNTAFGLLGMGPEGQPLGRRVASGPSPGEGISPQSAQAPQAPGDNHVVPVLR.

N-acetylalanine is present on Ala-2. 9 MVP repeats span residues 2–56 (ATEE…VPPR), 57–111 (HYCT…DITP), 112–164 (LQVV…EIIQ), 165–217 (ATII…DLVD), 218–272 (AVIL…GVVP), 273–323 (ITTL…IQDV), 324–379 (YVLS…ERQA), 380–457 (IPLD…KTRV), and 458–520 (VSYR…LLGP). Lys-444 is covalently cross-linked (Glycyl lysine isopeptide (Lys-Gly) (interchain with G-Cter in SUMO2)). Ser-445 carries the phosphoserine modification. A Glycyl lysine isopeptide (Lys-Gly) (interchain with G-Cter in SUMO2) cross-link involves residue Lys-704. Residues 856-893 (QPLGRRVASGPSPGEGISPQSAQAPQAPGDNHVVPVLR) are disordered.

As to quaternary structure, the vault ribonucleoprotein particle is a huge (400 A x 670 A) cage structure of 12.9 MDa. It consists of a dimer of half-vaults, with each half-vault comprising 39 identical major vault protein (MVP) chains, PARP4 and one or more vault RNAs (vRNAs). Interacts with TEP1. Interacts with PTEN and activated MAPK1. The phosphorylated protein interacts with the SH2 domains of PTPN11 and SRC. Interacts with APEX1. May interact with ZNF540. Phosphorylated on Tyr residues after EGF stimulation. Post-translationally, dephosphorylated by PTPN11. Present in most normal tissues. Higher expression observed in epithelial cells with secretory and excretory functions, as well as in cells chronically exposed to xenobiotics, such as bronchial cells and cells lining the intestine. Overexpressed in many multidrug-resistant cancer cells.

The protein resides in the cytoplasm. The protein localises to the nucleus. Its subcellular location is the nuclear pore complex. It localises to the perinuclear region. Required for normal vault structure. Vaults are multi-subunit structures that may act as scaffolds for proteins involved in signal transduction. Vaults may also play a role in nucleo-cytoplasmic transport. Down-regulates IFNG-mediated STAT1 signaling and subsequent activation of JAK. Down-regulates SRC activity and signaling through MAP kinases. This chain is Major vault protein (MVP), found in Homo sapiens (Human).